Consider the following 512-residue polypeptide: D-alanine--D-alanyl carrier protein ligase (512 aa).

152-153 (TS) contacts ATP. Asp199 is a D-alanine binding site. ATP is bound at residue 294 to 299 (NAYGPT). D-alanine is bound at residue Val303. ATP-binding positions include Asp385, 397–400 (YGGR), and Lys499. Residue Lys499 participates in D-alanine binding.

The protein belongs to the ATP-dependent AMP-binding enzyme family. DltA subfamily.

It is found in the cytoplasm. It carries out the reaction holo-[D-alanyl-carrier protein] + D-alanine + ATP = D-alanyl-[D-alanyl-carrier protein] + AMP + diphosphate. It participates in cell wall biogenesis; lipoteichoic acid biosynthesis. Catalyzes the first step in the D-alanylation of lipoteichoic acid (LTA), the activation of D-alanine and its transfer onto the D-alanyl carrier protein (Dcp) DltC. In an ATP-dependent two-step reaction, forms a high energy D-alanyl-AMP intermediate, followed by transfer of the D-alanyl residue as a thiol ester to the phosphopantheinyl prosthetic group of the Dcp. D-alanylation of LTA plays an important role in modulating the properties of the cell wall in Gram-positive bacteria, influencing the net charge of the cell wall. The sequence is that of D-alanine--D-alanyl carrier protein ligase from Streptococcus pyogenes serotype M1.